A 303-amino-acid chain; its full sequence is Probable 5-dehydro-4-deoxyglucarate dehydratase (303 aa).

Belongs to the DapA family.

It carries out the reaction 5-dehydro-4-deoxy-D-glucarate + H(+) = 2,5-dioxopentanoate + CO2 + H2O. Its pathway is carbohydrate acid metabolism; D-glucarate degradation; 2,5-dioxopentanoate from D-glucarate: step 2/2. This is Probable 5-dehydro-4-deoxyglucarate dehydratase from Ectopseudomonas mendocina (strain ymp) (Pseudomonas mendocina).